Here is a 492-residue protein sequence, read N- to C-terminus: MSKIFDLVVIGAGSGGLEAGWNAATLYKKRVAVIDVQTHHGPPHYAALGGTCVNVGCVPKKLMVTGAQYMDHLRESAGFGWEFDGSSVKANWKKLIAAKNEAVLDINKSYEGMFNDTEGLDFFLGWGSLESKNVVVVRETADPKSAVKERLQADHILLATGSWPQMPAIPGVEHCISSNEAFYLPEPPRRVLTVGGGFISVEFAGIFNAYKPPGGKVTLCYRNNLILRGFDETIREEVTKQLTANGIEIMTNENPAKVSLNTDGSKHVTFESGKTLDVDVVMMAIGRIPRTNDLQLGNVGVKLTPKGGVQVDEFSRTNVPNIYAIGDITDRLMLTPVAINEGAALVDTVFGNKPRKTDHTRVASAVFSIPPIGTCGLIEEVAAKEFEKVAVYMSSFTPLMHNISGSKYKKFVAKIVTNHSDGTVLGVHLLGDGAPEIIQAVGVCLRLNAKISDFYNTIGVHPTSAEELCSMRTPSYYYLKGEKMETLPESSL.

35-52 (DVQTHHGPPHYAALGGTC) is a binding site for FAD. A disulfide bridge links cysteine 52 with cysteine 57. The active-site Proton acceptor is histidine 461.

It belongs to the class-I pyridine nucleotide-disulfide oxidoreductase family. As to quaternary structure, homodimer. Requires FAD as cofactor.

Its subcellular location is the cytoplasm. It carries out the reaction trypanothione + NADP(+) = trypanothione disulfide + NADPH + H(+). Its function is as follows. Trypanothione is the parasite analog of glutathione; this enzyme is the equivalent of glutathione reductase. The sequence is that of Trypanothione reductase (TPR) from Trypanosoma brucei brucei.